The chain runs to 1129 residues: Nuclear pore complex protein 15 (1129 aa).

This sequence belongs to the nucleoporin Nup133 family.

The protein resides in the nucleus envelope. It localises to the nucleus. Its subcellular location is the nuclear pore complex. Functionally, important for early nematode development. The sequence is that of Nuclear pore complex protein 15 from Caenorhabditis elegans.